We begin with the raw amino-acid sequence, 250 residues long: Pyridoxine 5'-phosphate synthase (250 aa).

Asn11 is a binding site for 3-amino-2-oxopropyl phosphate. 1-deoxy-D-xylulose 5-phosphate is bound at residue 13-14 (DH). Arg22 lines the 3-amino-2-oxopropyl phosphate pocket. His47 serves as the catalytic Proton acceptor. 1-deoxy-D-xylulose 5-phosphate contacts are provided by Arg49 and His54. Catalysis depends on Glu74, which acts as the Proton acceptor. Residue Thr104 coordinates 1-deoxy-D-xylulose 5-phosphate. The Proton donor role is filled by His198. 3-amino-2-oxopropyl phosphate-binding positions include Gly199 and 220 to 221 (GY).

The protein belongs to the PNP synthase family. As to quaternary structure, homooctamer; tetramer of dimers.

The protein localises to the cytoplasm. It catalyses the reaction 3-amino-2-oxopropyl phosphate + 1-deoxy-D-xylulose 5-phosphate = pyridoxine 5'-phosphate + phosphate + 2 H2O + H(+). The protein operates within cofactor biosynthesis; pyridoxine 5'-phosphate biosynthesis; pyridoxine 5'-phosphate from D-erythrose 4-phosphate: step 5/5. Its function is as follows. Catalyzes the complicated ring closure reaction between the two acyclic compounds 1-deoxy-D-xylulose-5-phosphate (DXP) and 3-amino-2-oxopropyl phosphate (1-amino-acetone-3-phosphate or AAP) to form pyridoxine 5'-phosphate (PNP) and inorganic phosphate. This is Pyridoxine 5'-phosphate synthase from Bradyrhizobium diazoefficiens (strain JCM 10833 / BCRC 13528 / IAM 13628 / NBRC 14792 / USDA 110).